Consider the following 228-residue polypeptide: DOPA 4,5-dioxygenase (228 aa).

Homodimer. As to expression, expressed at high level in coloured cap tissue and at least 10 times lower level in the stipe.

The protein resides in the cytoplasm. It functions in the pathway pigment biosynthesis; betalain biosynthesis. Its function is as follows. Extradiol dioxygenase that opens up the cyclic ring of DOPA between carbons 4 and 5 thus producing an unstable seco-DOPA that rearranges non-enzymatically to betalamic acid. Can also catalyze the formation of muscaflavin (a pigment found in the hygrocybe mushrooms family and of some amanita species only) by a 2,3-extradiol cleavage of DOPA. In Amanita muscaria (Fly agaric), this protein is DOPA 4,5-dioxygenase (DODA).